We begin with the raw amino-acid sequence, 60 residues long: Large ribosomal subunit protein uL30 (60 aa).

This sequence belongs to the universal ribosomal protein uL30 family. Part of the 50S ribosomal subunit.

The polypeptide is Large ribosomal subunit protein uL30 (Shewanella woodyi (strain ATCC 51908 / MS32)).